The primary structure comprises 460 residues: UDP-N-acetylmuramate--L-alanine ligase (460 aa).

118–124 (GTHGKTT) serves as a coordination point for ATP.

Belongs to the MurCDEF family.

Its subcellular location is the cytoplasm. It carries out the reaction UDP-N-acetyl-alpha-D-muramate + L-alanine + ATP = UDP-N-acetyl-alpha-D-muramoyl-L-alanine + ADP + phosphate + H(+). It functions in the pathway cell wall biogenesis; peptidoglycan biosynthesis. Cell wall formation. The sequence is that of UDP-N-acetylmuramate--L-alanine ligase from Gloeobacter violaceus (strain ATCC 29082 / PCC 7421).